A 476-amino-acid polypeptide reads, in one-letter code: Bifunctional protein HldE (476 aa).

The interval Met-1–Thr-318 is ribokinase. Residue Asn-195 to Glu-198 coordinates ATP. Residue Asp-264 is part of the active site. The cytidylyltransferase stretch occupies residues Met-344–Gly-476.

In the N-terminal section; belongs to the carbohydrate kinase PfkB family. The protein in the C-terminal section; belongs to the cytidylyltransferase family. As to quaternary structure, homodimer.

The catalysed reaction is D-glycero-beta-D-manno-heptose 7-phosphate + ATP = D-glycero-beta-D-manno-heptose 1,7-bisphosphate + ADP + H(+). It carries out the reaction D-glycero-beta-D-manno-heptose 1-phosphate + ATP + H(+) = ADP-D-glycero-beta-D-manno-heptose + diphosphate. Its pathway is nucleotide-sugar biosynthesis; ADP-L-glycero-beta-D-manno-heptose biosynthesis; ADP-L-glycero-beta-D-manno-heptose from D-glycero-beta-D-manno-heptose 7-phosphate: step 1/4. It participates in nucleotide-sugar biosynthesis; ADP-L-glycero-beta-D-manno-heptose biosynthesis; ADP-L-glycero-beta-D-manno-heptose from D-glycero-beta-D-manno-heptose 7-phosphate: step 3/4. Catalyzes the phosphorylation of D-glycero-D-manno-heptose 7-phosphate at the C-1 position to selectively form D-glycero-beta-D-manno-heptose-1,7-bisphosphate. In terms of biological role, catalyzes the ADP transfer from ATP to D-glycero-beta-D-manno-heptose 1-phosphate, yielding ADP-D-glycero-beta-D-manno-heptose. The chain is Bifunctional protein HldE from Vibrio cholerae serotype O1 (strain M66-2).